A 92-amino-acid chain; its full sequence is Small ribosomal subunit protein uS19 (92 aa).

It belongs to the universal ribosomal protein uS19 family.

Protein S19 forms a complex with S13 that binds strongly to the 16S ribosomal RNA. The chain is Small ribosomal subunit protein uS19 from Rhodopseudomonas palustris (strain BisB18).